A 130-amino-acid polypeptide reads, in one-letter code: Small ribosomal subunit protein uS8 (130 aa).

It belongs to the universal ribosomal protein uS8 family. Part of the 30S ribosomal subunit. Contacts proteins S5 and S12.

Functionally, one of the primary rRNA binding proteins, it binds directly to 16S rRNA central domain where it helps coordinate assembly of the platform of the 30S subunit. The chain is Small ribosomal subunit protein uS8 from Klebsiella pneumoniae subsp. pneumoniae (strain ATCC 700721 / MGH 78578).